Reading from the N-terminus, the 235-residue chain is MSIHIGAQQGQIAETILLPGDPLRAKYIAETFLEGAECYNNVRGMLGFTGTYKGKRVSVQGTGMGVPSISIYANELMQSYGVQNLIRVGTCGAIQEDIKVRDVIIAMSASSESQTNRLLFDQIDFAPTANFELLHKAYQVATERNLPVKVGNIFTSDSFYRESLDLYKKLASYQVLAIEMESSALYTLAAKYKRNALSILTVSDHILTGEETSADERQSTFNEMIEVALDAALIK.

H4 provides a ligand contact to a purine D-ribonucleoside. Phosphate-binding positions include G20, R24, R43, and 87 to 90 (RVGT). A purine D-ribonucleoside-binding positions include 179 to 181 (EME) and 203 to 204 (SD). D204 (proton donor) is an active-site residue.

The protein belongs to the PNP/UDP phosphorylase family. In terms of assembly, homohexamer; trimer of homodimers.

The catalysed reaction is a purine D-ribonucleoside + phosphate = a purine nucleobase + alpha-D-ribose 1-phosphate. It catalyses the reaction a purine 2'-deoxy-D-ribonucleoside + phosphate = a purine nucleobase + 2-deoxy-alpha-D-ribose 1-phosphate. Its function is as follows. Catalyzes the reversible phosphorolytic breakdown of the N-glycosidic bond in the beta-(deoxy)ribonucleoside molecules, with the formation of the corresponding free purine bases and pentose-1-phosphate. The polypeptide is Purine nucleoside phosphorylase DeoD-type (Brevibacillus brevis (strain 47 / JCM 6285 / NBRC 100599)).